Consider the following 258-residue polypeptide: Hydroxyacylglutathione hydrolase (258 aa).

His-56, His-58, Asp-60, His-61, His-112, Asp-132, and His-170 together coordinate Zn(2+).

This sequence belongs to the metallo-beta-lactamase superfamily. Glyoxalase II family. Monomer. It depends on Zn(2+) as a cofactor.

The catalysed reaction is an S-(2-hydroxyacyl)glutathione + H2O = a 2-hydroxy carboxylate + glutathione + H(+). Its pathway is secondary metabolite metabolism; methylglyoxal degradation; (R)-lactate from methylglyoxal: step 2/2. In terms of biological role, thiolesterase that catalyzes the hydrolysis of S-D-lactoyl-glutathione to form glutathione and D-lactic acid. The protein is Hydroxyacylglutathione hydrolase of Pseudomonas aeruginosa (strain LESB58).